Reading from the N-terminus, the 456-residue chain is UDP-N-acetylmuramoylalanine--D-glutamate ligase (456 aa).

Gly-119–Thr-125 lines the ATP pocket.

The protein belongs to the MurCDEF family.

The protein resides in the cytoplasm. It catalyses the reaction UDP-N-acetyl-alpha-D-muramoyl-L-alanine + D-glutamate + ATP = UDP-N-acetyl-alpha-D-muramoyl-L-alanyl-D-glutamate + ADP + phosphate + H(+). It participates in cell wall biogenesis; peptidoglycan biosynthesis. In terms of biological role, cell wall formation. Catalyzes the addition of glutamate to the nucleotide precursor UDP-N-acetylmuramoyl-L-alanine (UMA). This Limosilactobacillus reuteri (strain DSM 20016) (Lactobacillus reuteri) protein is UDP-N-acetylmuramoylalanine--D-glutamate ligase.